Reading from the N-terminus, the 251-residue chain is Flap endonuclease Xni (251 aa).

Asp-104 lines the Mg(2+) pocket. Residues 160–249 (VLPRQLPDYW…IDGNLQQLRL (90 aa)) form the 5'-3' exonuclease domain. Leu-171, Ala-172, Pro-180, Val-182, and Ile-185 together coordinate K(+). The interval 184–189 (GIGPKS) is interaction with DNA.

The protein belongs to the Xni family. Requires Mg(2+) as cofactor. K(+) serves as cofactor.

Functionally, has flap endonuclease activity. During DNA replication, flap endonucleases cleave the 5'-overhanging flap structure that is generated by displacement synthesis when DNA polymerase encounters the 5'-end of a downstream Okazaki fragment. In Salmonella paratyphi A (strain ATCC 9150 / SARB42), this protein is Flap endonuclease Xni.